The sequence spans 860 residues: MNTALDDLHGDLVTLEDNEIINNSDHSSSHSTSHEEEDEEEDDTEDIELIEKDGNKILSSRIHPEDEIINDGLNIWIPVQMLKKNIAKFWSHFLAIEKKLTKVKCKHCGEILTRSDASLTKTFRSHLKTKHNISANKNFYSMNFTVGDSNLKNNTSSTEITRRHGYDSLTFNSDQSFKCFDIGKLQSSNYLSISQLVAIVIASENLPLNFFENVSFKSLLSKFHRIPPLTTNIIEESIIGLSKSIDELIRRSISRNDTQLPFTIHLSDSKESNQPLYLKYSREIRAQLSNLDLSHLISVNFTELAGKRSLFSLQLFDNTNKVSKGLPLSIFVRKTTDIDISVWQEQLNNLYSKYPGLQKSVISITLPQSHYTMVLENRNSHNFTFHSGSVREIKYHTCIVSELLHCFLQPLFNVPTESMLSSFSVAKENHSGGSLLDSLIDFSHIDLSSTILGKICCLIEEVNLNDSLKSDFLLYCQNYTQPNCNELTSILSCNCDRFSALKSILEKFANLVPFFKSINSHLENESLSESDFRLINTVEETLRTFEQSIEYFASSAPLKFTHTLVFIIKFELYLTEIIRSFKFTKSKKPFEKILARLLKVKDLYLLDDVNLIGAFLYPSIFQSKSLLNEIFGTTSVNKIVHNMTKIVLRYLKNFINITNFRSSNSGGESGRNSGNNLLSDYEAIFMKESRDVELLCNTKLTAPLTEDSLLVQIIRDDLLRYVNRIAHELPNAYHDYLNDNDISFDGSHFTKHELSEENDSNSGEWCLNPMEETFDIHIPISDSIWNNYISSKNKIEVIDILLQLLSVNSTSSIRSELSSLTANQDFSTKLSEETIKIKLLNSQFNLEKINFHSGSIFDAC.

The disordered stretch occupies residues E19–E45. Low complexity predominate over residues I20–S31. Residues E35–E45 are compositionally biased toward acidic residues. The segment at K84–N138 adopts a BED-type zinc-finger fold. Positions 105, 108, 126, and 131 each coordinate Zn(2+).

The protein belongs to the VID22 family.

The protein localises to the nucleus. Functionally, involved in vacuolar processing and morphology. The protein is Late endosome and vacuole interface protein 11 (ENV11) of Saccharomyces cerevisiae (strain ATCC 204508 / S288c) (Baker's yeast).